A 265-amino-acid polypeptide reads, in one-letter code: MAMPDFTMRQLLEAGVHFGHHTRRWNPAMAPYLFGVRNQVHIIDLQQTVPMLDRALKVVRDTVANGGRVLFVGTKRAAADHVAEAAQRCGQYYVNHRWLGGMLTNWKTITGSIKRLRQIDEMLSGDTAGLTKKEVLDITRDREKLERSLGGIKEMGGLPDLLFVIDTNKEKLAIEEATKLGIPVIGVLDSNSNPAGVTYPIPGNDDAIRAITLYCDLVSGAVLDGISAELAASGQDIGAAEELPAETAVLEAAAAEGAEAPASAG.

The protein belongs to the universal ribosomal protein uS2 family.

This Gluconobacter oxydans (strain 621H) (Gluconobacter suboxydans) protein is Small ribosomal subunit protein uS2.